The primary structure comprises 430 residues: uncharacterized protein (430 aa).

Its subcellular location is the cytoplasm. It localises to the nucleus. This is an uncharacterized protein from Schizosaccharomyces pombe (strain 972 / ATCC 24843) (Fission yeast).